Here is a 106-residue protein sequence, read N- to C-terminus: Ig kappa chain C region, B allele (106 aa).

Residues 5 to 102 (PTVSIFPPST…SSSPVVKSFN (98 aa)) form the Ig-like domain. Residues Cys26 and Cys86 are joined by a disulfide bond.

The chain is Ig kappa chain C region, B allele from Rattus norvegicus (Rat).